We begin with the raw amino-acid sequence, 197 residues long: UPF0314 protein R03235 (197 aa).

Helical transmembrane passes span 16–36 and 152–172; these read ALWLLACLGVLAIQVLVQHLM and LPVAATVAIAIVLELFTGYMV.

The protein belongs to the UPF0314 family.

It is found in the cell membrane. The protein is UPF0314 protein R03235 of Rhizobium meliloti (strain 1021) (Ensifer meliloti).